The sequence spans 70 residues: Small ribosomal subunit protein bS21 (70 aa).

This sequence belongs to the bacterial ribosomal protein bS21 family.

This chain is Small ribosomal subunit protein bS21, found in Campylobacter fetus subsp. fetus (strain 82-40).